The sequence spans 291 residues: uncharacterized protein (291 aa).

In terms of domain architecture, PNPLA spans 5-196; that stretch reads GVFSGGGVKG…LSNFPIWLFS (192 aa). The GXGXXG signature appears at 9 to 14; it reads GGGVKG. Residues 34-50 traverse the membrane as a helical segment; the sequence is VAGTSAGAIIAAFIASG. A GXSXG motif is present at residues 36-40; that stretch reads GTSAG. Ser38 acts as the Nucleophile in catalysis. The active-site Proton acceptor is the Asp183. A DGA/G motif is present at residues 183–185; the sequence is DGG.

The protein localises to the cell membrane. Its function is as follows. Probable lipid hydrolase. This is an uncharacterized protein from Bacillus subtilis (strain 168).